The chain runs to 338 residues: O-methyltransferase 4 (338 aa).

6 residues coordinate S-adenosyl-L-methionine: Gly-184, Asp-207, Asn-230, Phe-231, Lys-244, and Arg-245. The active-site Proton acceptor is the His-248.

This sequence belongs to the class I-like SAM-binding methyltransferase superfamily. Cation-independent O-methyltransferase family. COMT subfamily.

It carries out the reaction (3,5-dichloro-2,4,6-trihydroxyphenyl)hexan-1-one + S-adenosyl-L-methionine = 1-(3,5-dichloro-2,6-dihydroxy-4-methoxyphenyl)hexan-1-one + S-adenosyl-L-homocysteine + H(+). The sequence is that of O-methyltransferase 4 (omt4) from Dictyostelium discoideum (Social amoeba).